Here is an 88-residue protein sequence, read N- to C-terminus: Large ribosomal subunit protein bL27 (88 aa).

Residues 1–21 (MAHKKGQGSTQNNRDSAGRRL) form a disordered region.

Belongs to the bacterial ribosomal protein bL27 family.

The protein is Large ribosomal subunit protein bL27 of Helicobacter pylori (strain J99 / ATCC 700824) (Campylobacter pylori J99).